The primary structure comprises 214 residues: MERRELTYKICLIGDGGVGKTTYINRVLDGRFEKNYNATVGAVNHPVTFLDDQGNVIKFNVWDTAGQEKKAVLKDVYYIGASGAIFFFDVTSRITCQNLARWVKEFQAVVGNEAPIVVCANKIDIKNRQKISKKLVMEVLKGKNYEYFEISAKTAHNFGLPFLHLARIFTGRPDLIFVSNVNLEPTEVNYDYHSPEESKYIDYMEQASKMAPEE.

The Small GTPase Ran-type domain occupies 4–172; sequence RELTYKICLI…LHLARIFTGR (169 aa). 17–22 lines the GTP pocket; the sequence is GVGKTT. A switch-I region spans residues 34–42; it reads KNYNATVGA. Residues glycine 66, 121 to 124, and 151 to 153 each bind GTP; these read NKID and SAK. Positions 66-82 are switch-II; the sequence is GQEKKAVLKDVYYIGAS.

It belongs to the small GTPase superfamily. Ran family. In terms of assembly, found in a nuclear export complex with RanGTP, exportin and pre-miRNA.

Its subcellular location is the nucleus. GTP-binding protein involved in nucleocytoplasmic transport. Required for the import of protein into the nucleus and also for RNA export. This is GTP-binding nuclear protein GSP1 (GSP1) from Encephalitozoon cuniculi (strain GB-M1) (Microsporidian parasite).